Reading from the N-terminus, the 518-residue chain is Golgi-associated olfactory signaling regulator (518 aa).

Positions 1 to 19 (MKSFSRILFLVFLLAGLRS) are cleaved as a signal peptide. The Extracellular segment spans residues 20–409 (KAAPSAPLPL…GRPRGAAGGA (390 aa)). The interval 38–377 (HPSETSPLKG…ATLRAPQRHS (340 aa)) is disordered. A compositionally biased stretch (basic and acidic residues) spans 92–106 (DLRETPHPESPETPK). Residue asparagine 124 is glycosylated (N-linked (GlcNAc...) asparagine). Positions 138–153 (TPGPTEMPHPGSPETP) are enriched in pro residues. N-linked (GlcNAc...) asparagine glycosylation is present at asparagine 156. Composition is skewed to polar residues over residues 168–180 (TPNTDLMQTTPQE) and 187–207 (LNATEVSQAELPETSNTNPTK). Residues asparagine 188 and asparagine 220 are each glycosylated (N-linked (GlcNAc...) asparagine). Composition is skewed to basic and acidic residues over residues 209–220 (PDPKSPEKHDLN) and 236–247 (DPSKTPHPESHV). Polar residues-rich tracts occupy residues 248–270 (THNPSPTEISQTEFPTTYYQNAT) and 276–285 (SDPQISTSLY). A glycan (N-linked (GlcNAc...) asparagine) is linked at asparagine 268. Residues 410 to 430 (LCLFFAGTALLIGIFVLLWCL) form a helical membrane-spanning segment. At 431-518 (YRRAARQRPF…SPATLPNNFV (88 aa)) the chain is on the cytoplasmic side. The tract at residues 477 to 518 (HIATKQPPPTPPLPPKLPPPPRGGRPQRLEALSPATLPNNFV) is disordered. A compositionally biased stretch (pro residues) spans 482-499 (QPPPTPPLPPKLPPPPRG).

The protein localises to the golgi apparatus membrane. In terms of biological role, required for proper function of the olfactory system. May be involved in establishing the acuity of olfactory sensory signaling. The polypeptide is Golgi-associated olfactory signaling regulator (GFY) (Homo sapiens (Human)).